The following is a 439-amino-acid chain: Probable N-acetylmuramidase (439 aa).

The N-terminal stretch at 1 to 57 is a signal peptide; it reads MPVSRIKVKNRHLKKKAKKPLAFYKPATKFAGAVLIAGTLTTTHELLLQQTSPMVQA. Disordered regions lie at residues 218-241 and 287-320; these read SAGTSNSGGSTATNTNNNSNTSST and SSSSSNTNSSTSSGNSAGTTTPTTSVTPAKPASQ. Residues 241–284 form the LysM 1 domain; it reads TTYTVKSGDTLWGISQKYGISVAQIQSANNLKSTVIYIGQKLVL. The segment covering 287–319 has biased composition (low complexity); sequence SSSSSNTNSSTSSGNSAGTTTPTTSVTPAKPAS. In terms of domain architecture, LysM 2 spans 321 to 364; that stretch reads TTIKVKSGDTLWGLSVKYKTTIAQLKSWNHLNSDTIFIGQNLIV. A disordered region spans residues 372-393; it reads SSSTGSSSASTSSTSNSSAASN. The 44-residue stretch at 395 to 438 folds into the LysM 3 domain; sequence SIHKVVKGDTLWGLSQKSGSPIASIKAWNHLSSDTILIGQYLRI.

This sequence belongs to the glycosyl hydrolase 73 family.

It localises to the secreted. The enzyme catalyses Hydrolysis of (1-&gt;4)-beta-linkages between N-acetylmuramic acid and N-acetyl-D-glucosamine residues in a peptidoglycan and between N-acetyl-D-glucosamine residues in chitodextrins.. Its function is as follows. Required for cell separation during growth. In Lactococcus lactis subsp. lactis (strain IL1403) (Streptococcus lactis), this protein is Probable N-acetylmuramidase (acmA).